A 294-amino-acid polypeptide reads, in one-letter code: tRNA pseudouridine synthase B (294 aa).

The active-site Nucleophile is the Asp40.

The protein belongs to the pseudouridine synthase TruB family. Type 1 subfamily.

The enzyme catalyses uridine(55) in tRNA = pseudouridine(55) in tRNA. Its function is as follows. Responsible for synthesis of pseudouridine from uracil-55 in the psi GC loop of transfer RNAs. The sequence is that of tRNA pseudouridine synthase B from Synechococcus elongatus (strain ATCC 33912 / PCC 7942 / FACHB-805) (Anacystis nidulans R2).